Consider the following 388-residue polypeptide: Alanine racemase (388 aa).

Lys44 serves as the catalytic Proton acceptor; specific for D-alanine. At Lys44 the chain carries N6-(pyridoxal phosphate)lysine. Arg142 contacts substrate. The active-site Proton acceptor; specific for L-alanine is the Tyr273. Met321 lines the substrate pocket.

This sequence belongs to the alanine racemase family. It depends on pyridoxal 5'-phosphate as a cofactor.

It catalyses the reaction L-alanine = D-alanine. Its pathway is amino-acid biosynthesis; D-alanine biosynthesis; D-alanine from L-alanine: step 1/1. In terms of biological role, catalyzes the interconversion of L-alanine and D-alanine. May also act on other amino acids. The polypeptide is Alanine racemase (alr) (Mycobacterium avium (strain 104)).